A 426-amino-acid polypeptide reads, in one-letter code: Histidine--tRNA ligase (426 aa).

This sequence belongs to the class-II aminoacyl-tRNA synthetase family. In terms of assembly, homodimer.

It is found in the cytoplasm. It catalyses the reaction tRNA(His) + L-histidine + ATP = L-histidyl-tRNA(His) + AMP + diphosphate + H(+). This is Histidine--tRNA ligase from Streptococcus pyogenes serotype M49 (strain NZ131).